We begin with the raw amino-acid sequence, 1197 residues long: ATP-dependent helicase/nuclease subunit A (1197 aa).

In terms of domain architecture, UvrD-like helicase ATP-binding spans 2-458 (KNWTTEQQAA…IDLAKNFRSR (457 aa)). 23-30 (AAAGSGKT) lines the ATP pocket. The region spanning 485–774 (RAALYQGASF…RIMSIHKSKG (290 aa)) is the UvrD-like helicase C-terminal domain.

This sequence belongs to the helicase family. AddA subfamily. In terms of assembly, heterodimer of AddA and AddB/RexB. Mg(2+) serves as cofactor.

It carries out the reaction Couples ATP hydrolysis with the unwinding of duplex DNA by translocating in the 3'-5' direction.. The enzyme catalyses ATP + H2O = ADP + phosphate + H(+). The heterodimer acts as both an ATP-dependent DNA helicase and an ATP-dependent, dual-direction single-stranded exonuclease. Recognizes the chi site generating a DNA molecule suitable for the initiation of homologous recombination. The AddA nuclease domain is required for chi fragment generation; this subunit has the helicase and 3' -&gt; 5' nuclease activities. This Alkaliphilus metalliredigens (strain QYMF) protein is ATP-dependent helicase/nuclease subunit A.